The chain runs to 329 residues: Putative HTH-type transcriptional regulatory protein APE_0778 (329 aa).

The region spanning 142 to 200 (LREKRLEKGLSLGHLAYMLKTSRKSIYEYERGVMSPSVEKAEKLVDILGEEILEPIDIL) is the HTH cro/C1-type domain. The H-T-H motif DNA-binding region spans 153–172 (LGHLAYMLKTSRKSIYEYER).

The polypeptide is Putative HTH-type transcriptional regulatory protein APE_0778 (Aeropyrum pernix (strain ATCC 700893 / DSM 11879 / JCM 9820 / NBRC 100138 / K1)).